The chain runs to 535 residues: Light-independent protochlorophyllide reductase subunit B (535 aa).

Residue aspartate 36 participates in [4Fe-4S] cluster binding. Residue aspartate 292 is the Proton donor of the active site. Residue 428-429 (GL) coordinates substrate. Residues 446-483 (DEASPSESAPHASNGHEDVAGGSTAQSVPSHAATEGDG) are disordered.

Belongs to the ChlB/BchB/BchZ family. Protochlorophyllide reductase is composed of three subunits; BchL, BchN and BchB. Forms a heterotetramer of two BchB and two BchN subunits. [4Fe-4S] cluster serves as cofactor.

The enzyme catalyses chlorophyllide a + oxidized 2[4Fe-4S]-[ferredoxin] + 2 ADP + 2 phosphate = protochlorophyllide a + reduced 2[4Fe-4S]-[ferredoxin] + 2 ATP + 2 H2O. It functions in the pathway porphyrin-containing compound metabolism; bacteriochlorophyll biosynthesis (light-independent). Functionally, component of the dark-operative protochlorophyllide reductase (DPOR) that uses Mg-ATP and reduced ferredoxin to reduce ring D of protochlorophyllide (Pchlide) to form chlorophyllide a (Chlide). This reaction is light-independent. The NB-protein (BchN-BchB) is the catalytic component of the complex. The chain is Light-independent protochlorophyllide reductase subunit B from Chlorobium limicola (strain DSM 245 / NBRC 103803 / 6330).